Reading from the N-terminus, the 492-residue chain is Protein nucleotidyltransferase YdiU (492 aa).

8 residues coordinate ATP: Gly91, Gly93, Arg94, Lys114, Asp126, Gly127, Arg180, and Arg187. The active-site Proton acceptor is the Asp256. Residues Asn257 and Asp266 each contribute to the Mg(2+) site. Asp266 contacts ATP.

The protein belongs to the SELO family. The cofactor is Mg(2+). Requires Mn(2+) as cofactor.

It carries out the reaction L-seryl-[protein] + ATP = 3-O-(5'-adenylyl)-L-seryl-[protein] + diphosphate. It catalyses the reaction L-threonyl-[protein] + ATP = 3-O-(5'-adenylyl)-L-threonyl-[protein] + diphosphate. The catalysed reaction is L-tyrosyl-[protein] + ATP = O-(5'-adenylyl)-L-tyrosyl-[protein] + diphosphate. The enzyme catalyses L-histidyl-[protein] + UTP = N(tele)-(5'-uridylyl)-L-histidyl-[protein] + diphosphate. It carries out the reaction L-seryl-[protein] + UTP = O-(5'-uridylyl)-L-seryl-[protein] + diphosphate. It catalyses the reaction L-tyrosyl-[protein] + UTP = O-(5'-uridylyl)-L-tyrosyl-[protein] + diphosphate. Nucleotidyltransferase involved in the post-translational modification of proteins. It can catalyze the addition of adenosine monophosphate (AMP) or uridine monophosphate (UMP) to a protein, resulting in modifications known as AMPylation and UMPylation. The sequence is that of Protein nucleotidyltransferase YdiU from Synechococcus elongatus (strain ATCC 33912 / PCC 7942 / FACHB-805) (Anacystis nidulans R2).